Consider the following 39-residue polypeptide: Photosystem II reaction center protein J (39 aa).

The helical transmembrane segment at 7-27 (IPLWVVAVIAGLGVIAVVGLF) threads the bilayer.

Belongs to the PsbJ family. In terms of assembly, PSII is composed of 1 copy each of membrane proteins PsbA, PsbB, PsbC, PsbD, PsbE, PsbF, PsbH, PsbI, PsbJ, PsbK, PsbL, PsbM, PsbT, PsbX, PsbY, PsbZ, Psb30/Ycf12, peripheral proteins PsbO, CyanoQ (PsbQ), PsbU, PsbV and a large number of cofactors. It forms dimeric complexes.

Its subcellular location is the cellular thylakoid membrane. Functionally, one of the components of the core complex of photosystem II (PSII). PSII is a light-driven water:plastoquinone oxidoreductase that uses light energy to abstract electrons from H(2)O, generating O(2) and a proton gradient subsequently used for ATP formation. It consists of a core antenna complex that captures photons, and an electron transfer chain that converts photonic excitation into a charge separation. The sequence is that of Photosystem II reaction center protein J from Gloeothece citriformis (strain PCC 7424) (Cyanothece sp. (strain PCC 7424)).